The sequence spans 419 residues: MDKFKIRGGQPLSGSVTISGAKNAALPILMASLLPSEKITLSNVPDLHDVDTTLELLDCLGISHSNLNNNSVCIDPTTLNHFKAPYDLVKTMRASILVLGPLLAKTGKAEVSLPGGCAIGARPVNLHIEGLRKMGAHIDVENGYIKASVEGRLQGAEILLDTVSVTGTENLMMAAVLAEGETVIENAAREPEVIDLANFLNSLGANVRDAGSDTIHITGVNKLHGGEYSVMPDRIETGTFLVAALATGGSVRCEKTDPASLDAVLKKLEEAGATIDKGDNWIAIQSHGRPKAVNIITAPHPAFPTDMQAQFCALNAIAEGTAGIRETIFENRFMHIPELRRMGANVESEGNTALCHGVDELTGAEVMCTDLRASASLVIAGLVATGETVVERIYHIDRGYEGIEKKLQGLGADIERVTA.

Position 22–23 (22–23 (KN)) interacts with phosphoenolpyruvate. A UDP-N-acetyl-alpha-D-glucosamine-binding site is contributed by Arg93. Cys117 acts as the Proton donor in catalysis. The residue at position 117 (Cys117) is a 2-(S-cysteinyl)pyruvic acid O-phosphothioketal. The UDP-N-acetyl-alpha-D-glucosamine site is built by Asp306 and Ile328.

The protein belongs to the EPSP synthase family. MurA subfamily.

The protein resides in the cytoplasm. The catalysed reaction is phosphoenolpyruvate + UDP-N-acetyl-alpha-D-glucosamine = UDP-N-acetyl-3-O-(1-carboxyvinyl)-alpha-D-glucosamine + phosphate. It participates in cell wall biogenesis; peptidoglycan biosynthesis. In terms of biological role, cell wall formation. Adds enolpyruvyl to UDP-N-acetylglucosamine. This chain is UDP-N-acetylglucosamine 1-carboxyvinyltransferase, found in Idiomarina loihiensis (strain ATCC BAA-735 / DSM 15497 / L2-TR).